Consider the following 701-residue polypeptide: Polyribonucleotide nucleotidyltransferase (701 aa).

Residues aspartate 485 and aspartate 491 each coordinate Mg(2+). Positions 552 to 611 (PKTQIMSINPDKIRDVIGAGGKVINKIIQDTGVKIDIKEDGTVFVSSTDHNGVNEAIKII) constitute a KH domain. An S1 motif domain is found at 621 to 689 (GEVYLGKVTK…NQGRINLSRK (69 aa)).

The protein belongs to the polyribonucleotide nucleotidyltransferase family. The cofactor is Mg(2+).

Its subcellular location is the cytoplasm. The catalysed reaction is RNA(n+1) + phosphate = RNA(n) + a ribonucleoside 5'-diphosphate. Functionally, involved in mRNA degradation. Catalyzes the phosphorolysis of single-stranded polyribonucleotides processively in the 3'- to 5'-direction. The sequence is that of Polyribonucleotide nucleotidyltransferase from Clostridium beijerinckii (strain ATCC 51743 / NCIMB 8052) (Clostridium acetobutylicum).